The chain runs to 316 residues: Pyridoxal 5'-phosphate synthase subunit PdxS (316 aa).

Aspartate 44 serves as a coordination point for D-ribose 5-phosphate. Residue lysine 101 is the Schiff-base intermediate with D-ribose 5-phosphate of the active site. D-ribose 5-phosphate is bound at residue glycine 173. Residue lysine 185 participates in D-glyceraldehyde 3-phosphate binding. Residues glycine 234 and 255-256 (GS) each bind D-ribose 5-phosphate.

It belongs to the PdxS/SNZ family. In terms of assembly, in the presence of PdxT, forms a dodecamer of heterodimers.

The enzyme catalyses aldehydo-D-ribose 5-phosphate + D-glyceraldehyde 3-phosphate + L-glutamine = pyridoxal 5'-phosphate + L-glutamate + phosphate + 3 H2O + H(+). Its pathway is cofactor biosynthesis; pyridoxal 5'-phosphate biosynthesis. Catalyzes the formation of pyridoxal 5'-phosphate from ribose 5-phosphate (RBP), glyceraldehyde 3-phosphate (G3P) and ammonia. The ammonia is provided by the PdxT subunit. Can also use ribulose 5-phosphate and dihydroxyacetone phosphate as substrates, resulting from enzyme-catalyzed isomerization of RBP and G3P, respectively. The chain is Pyridoxal 5'-phosphate synthase subunit PdxS from Sulfurisphaera tokodaii (strain DSM 16993 / JCM 10545 / NBRC 100140 / 7) (Sulfolobus tokodaii).